Consider the following 299-residue polypeptide: Glycine--tRNA ligase alpha subunit (299 aa).

The protein belongs to the class-II aminoacyl-tRNA synthetase family. Tetramer of two alpha and two beta subunits.

Its subcellular location is the cytoplasm. The enzyme catalyses tRNA(Gly) + glycine + ATP = glycyl-tRNA(Gly) + AMP + diphosphate. This Dictyoglomus thermophilum (strain ATCC 35947 / DSM 3960 / H-6-12) protein is Glycine--tRNA ligase alpha subunit.